The primary structure comprises 155 residues: Endoribonuclease YbeY (155 aa).

Residues His114, His118, and His124 each contribute to the Zn(2+) site.

It belongs to the endoribonuclease YbeY family. It depends on Zn(2+) as a cofactor.

The protein resides in the cytoplasm. Functionally, single strand-specific metallo-endoribonuclease involved in late-stage 70S ribosome quality control and in maturation of the 3' terminus of the 16S rRNA. The polypeptide is Endoribonuclease YbeY (Escherichia coli O1:K1 / APEC).